The primary structure comprises 301 residues: Probable alpha-L-glutamate ligase (301 aa).

The ATP-grasp domain maps to 104-287; sequence LQLLSRRGIG…VAGMIIEHLE (184 aa). ATP is bound by residues K141, 178-179, D187, and 211-213; these read EY and RSN. Positions 248, 260, and 262 each coordinate Mg(2+). The Mn(2+) site is built by D248, E260, and N262.

Belongs to the RimK family. Mg(2+) is required as a cofactor. Requires Mn(2+) as cofactor.

The polypeptide is Probable alpha-L-glutamate ligase (Pseudomonas putida (strain GB-1)).